Consider the following 880-residue polypeptide: Pyruvate, phosphate dikinase (880 aa).

The N-terminal stretch occupies residues 1–348; that stretch reads MNKLIYYFGN…LYILQTRTAK (348 aa). Arg97 serves as a coordination point for ATP. The tract at residues 349-405 is linker 1; that stretch reads RTAIAAINIAVQMVEEKLISKEQALMRIDPESLNQLLHTRIDYSKKLTAIAEGLPAS. Residues 406-503 are central; it reads PGAATGIVVF…VIKQGDIITI (98 aa). Thr458 carries the phosphothreonine; by PDRP1 modification. The active-site Tele-phosphohistidine intermediate is the His460. The interval 504 to 538 is linker 2; it reads DGGSGKIFLGEMPLIQPTFSEESTLILDWADEISS. Residues 539 to 879 are C-terminal; the sequence is LKVRANAETV…AAAQAKIKQG (341 aa). Residues Arg566, Arg622, Glu750, Gly771, Thr772, Asn773, and Asp774 each contribute to the substrate site. Glu750 contributes to the Mg(2+) binding site. Asp774 contacts Mg(2+). Cys836 functions as the Proton donor in the catalytic mechanism.

It belongs to the PEP-utilizing enzyme family. In terms of assembly, homodimer. The cofactor is Mg(2+). In terms of processing, phosphorylation of Thr-458 in the dark inactivates the enzyme. Dephosphorylation upon light stimulation reactivates the enzyme.

The enzyme catalyses pyruvate + phosphate + ATP = phosphoenolpyruvate + AMP + diphosphate + H(+). With respect to regulation, activated by light-induced dephosphorylation. Inhibited by dark-induced phosphorylation. Both reactions are catalyzed by PDRP1. Its function is as follows. Catalyzes the reversible phosphorylation of pyruvate and phosphate. This Rickettsia typhi (strain ATCC VR-144 / Wilmington) protein is Pyruvate, phosphate dikinase (ppdK).